The following is a 127-amino-acid chain: uncharacterized protein (127 aa).

This is an uncharacterized protein from Human cytomegalovirus (strain Toledo) (HHV-5).